The chain runs to 461 residues: Argininosuccinate lyase (461 aa).

This sequence belongs to the lyase 1 family. Argininosuccinate lyase subfamily.

The protein localises to the cytoplasm. The enzyme catalyses 2-(N(omega)-L-arginino)succinate = fumarate + L-arginine. The protein operates within amino-acid biosynthesis; L-arginine biosynthesis; L-arginine from L-ornithine and carbamoyl phosphate: step 3/3. This Syntrophotalea carbinolica (strain DSM 2380 / NBRC 103641 / GraBd1) (Pelobacter carbinolicus) protein is Argininosuccinate lyase.